The primary structure comprises 6359 residues: Bacitracin synthase 3 (6359 aa).

Residues 461-1034 are domain 1 (isoleucine-activating); the sequence is LHELFEEQAM…IKGLGEYIRS (574 aa). Basic and acidic residues predominate over residues 941–953; that stretch reads VDRKALPEPDRTA. Residues 941-962 are disordered; it reads VDRKALPEPDRTAGAENEYEAP. 5 consecutive Carrier domains span residues 961–1036, 1993–2067, 3497–3572, 4539–4613, and 6047–6122; these read APRN…RSTK, APRN…KKQS, APRN…ESMK, PPRN…KAES, and PPRH…KHAQ. O-(pantetheine 4'-phosphoryl)serine is present on residues serine 996, serine 2028, and serine 3532. The domain 2 (D-phenylalanine-activating) stretch occupies residues 1517–2064; the sequence is FEDQTLTYRQ…RIKDLAKYVK (548 aa). Positions 2999-3570 are domain 3 (histidine-activating); it reads NKTIHQLFEE…IKDIGDFIES (572 aa). Residues 4047–4612 are domain 4 (D-aspartic acid-activating); that stretch reads EQTAVVYADE…KSLSRYVKAE (566 aa). A disordered region spans residues 4521–4544; sequence IDTAALPEPQPGKETEYEPPRNET. A compositionally biased stretch (basic and acidic residues) spans 4531–4544; that stretch reads PGKETEYEPPRNET. O-(pantetheine 4'-phosphoryl)serine is present on residues serine 4574 and serine 6082. The interval 5549–6129 is domain 5 (asparagine-activating); it reads IHRLFEEQAE…HAQDLLKDYT (581 aa).

The protein belongs to the ATP-dependent AMP-binding enzyme family. In terms of assembly, large multienzyme complex of BA1, BA2 and BA3. Pantetheine 4'-phosphate is required as a cofactor.

The enzyme catalyses L-aspartate = D-aspartate. The catalysed reaction is L-phenylalanine + ATP + H2O = D-phenylalanine + AMP + diphosphate + H(+). The protein operates within antibiotic biosynthesis; bacitracin biosynthesis. In terms of biological role, induces peptide synthesis, activates and incorporates five amino acids, forms a thiazoline ring between the first two amino acids and incorporates a D-glutamine in the fourth position. The polypeptide is Bacitracin synthase 3 (bacC) (Bacillus licheniformis).